Consider the following 349-residue polypeptide: N-acetyltaurine hydrolase (349 aa).

The a divalent metal cation site is built by histidine 26, histidine 28, glutamate 169, histidine 201, histidine 230, and aspartate 298.

It belongs to the metallo-dependent hydrolases superfamily. Phosphotriesterase family. Requires a divalent metal cation as cofactor.

The protein resides in the cytoplasm. The protein localises to the cytosol. It catalyses the reaction N-acetyltaurine + H2O = taurine + acetate. It carries out the reaction N-propanoyltaurine + H2O = propanoate + taurine. The enzyme catalyses N-acetyl-L-methionine + H2O = L-methionine + acetate. The catalysed reaction is N-acetyl-L-isoleucine + H2O = L-isoleucine + acetate. It catalyses the reaction N-acetyl-L-leucine + H2O = L-leucine + acetate. It carries out the reaction N-acetyl-L-valine + H2O = L-valine + acetate. N-acetyltaurine hydrolase that catalyzes the hydrolysis of N-acetyltaurine into taurine and acetate. PTER also acts on other N-acetyl amino acids (Met, Ile, Leu, Val) and N-propionyltaurine, but at lower rates. The chain is N-acetyltaurine hydrolase (pter) from Salmo salar (Atlantic salmon).